A 1876-amino-acid polypeptide reads, in one-letter code: 1,3-beta-glucan synthase component FKS1 (1876 aa).

2 stretches are compositionally biased toward polar residues: residues 1–25 (MNTD…QSQE) and 60–71 (QPPNESYDQDYT). The tract at residues 1 to 108 (MNTDQQPYQG…PGTPGYDSYG (108 aa)) is disordered. The Cytoplasmic segment spans residues 1-454 (MNTDQQPYQG…WLHLVTNFNR (454 aa)). Lys259 participates in a covalent cross-link: Glycyl lysine isopeptide (Lys-Gly) (interchain with G-Cter in ubiquitin). Residues Thr269 and Thr272 each carry the phosphothreonine modification. Glycyl lysine isopeptide (Lys-Gly) (interchain with G-Cter in ubiquitin) cross-links involve residues Lys275 and Lys386. A helical membrane pass occupies residues 455–475 (IWVMHISIFWMYFAYNSPTFY). Topologically, residues 476–492 (THNYQQLVDNQPLAAYK) are extracellular. The chain crosses the membrane as a helical span at residues 493–513 (WASCALGGTVASLIQIVATLC). Topologically, residues 514–531 (EWSFVPRKWAGAQHLSRR) are cytoplasmic. Residues 532–552 (FWFLCIIFGINLGPIIFVFAY) traverse the membrane as a helical segment. Over 553 to 563 (DKDTVYSTAAH) the chain is Extracellular. Residues 564–584 (VVAAVMFFVAVATIIFFSIMP) form a helical membrane-spanning segment. Residues 585-621 (LGGLFTSYMKKSTRRYVASQTFTAAFAPLHGLDRWMS) lie on the Cytoplasmic side of the membrane. Residues 622-642 (YLVWVTVFAAKYSESYYFLVL) traverse the membrane as a helical segment. Residues 643-678 (SLRDPIRILSTTAMRCTGEYWWGAVLCKVQPKIVLG) lie on the Extracellular side of the membrane. Residues 679-699 (LVIATDFILFFLDTYLWYIIV) form a helical membrane-spanning segment. Topologically, residues 700-1358 (NTIFSVGKSF…QPAVDWVRRY (659 aa)) are cytoplasmic. Residues Lys910 and Lys915 each participate in a glycyl lysine isopeptide (Lys-Gly) (interchain with G-Cter in ubiquitin) cross-link. A helical membrane pass occupies residues 1359 to 1379 (TLSIFIVFWIAFVPIVVQELI). At 1380–1444 (ERGLWKATQR…RIPFSILYSR (65 aa)) the chain is on the extracellular side. Residues 1445–1465 (FAGSAIYMGARSMLMLLFGTV) traverse the membrane as a helical segment. Over 1466 to 1469 (AHWQ) the chain is Cytoplasmic. The helical transmembrane segment at 1470–1490 (APLLWFWASLSSLIFAPFVFN) threads the bilayer. At 1491 to 1560 (PHQFAWEDFF…DASRAHRTNL (70 aa)) the chain is on the extracellular side. Glycyl lysine isopeptide (Lys-Gly) (interchain with G-Cter in ubiquitin) cross-links involve residues Lys1539 and Lys1547. The helical transmembrane segment at 1561-1581 (IMAEIIPCAIYAAGCFIAFTF) threads the bilayer. The Cytoplasmic portion of the chain corresponds to 1582–1601 (INAQTGVKTTDDDRVNSVLR). The chain crosses the membrane as a helical span at residues 1602 to 1622 (IIICTLAPIAVNLGVLFFCMG). Residues 1623–1643 (MSCCSGPLFGMCCKKTGSVMA) lie on the Extracellular side of the membrane. Residues 1644–1664 (GIAHGVAVIVHIAFFIVMWVL) form a helical membrane-spanning segment. Residues 1665 to 1672 (ESFNFVRM) are Cytoplasmic-facing. Residues 1673 to 1695 (LIGVVTCIQCQRLIFHCMTALML) traverse the membrane as a helical segment. At 1696–1802 (TREFKNDHAN…RKRMVKKYCS (107 aa)) the chain is on the extracellular side. Residues 1803–1823 (LYFLVLAIFAGCIIGPAVASA) traverse the membrane as a helical segment. The Cytoplasmic segment spans residues 1824 to 1876 (KIHKHIGDSLDGVVHNLFQPINTTNNDTGSQMSTYQSHYYTHTPSLKTWSTIK).

The protein belongs to the glycosyltransferase 48 family. Component of the 1,3-beta-glucan synthase (GS) complex, composed of two alternate catalytic subunits FKS1 or GSC2, and a regulatory subunit RHO1. Interacts with RHO1, which is a GTP-binding protein.

The protein resides in the mitochondrion. Its subcellular location is the cell membrane. It carries out the reaction [(1-&gt;3)-beta-D-glucosyl](n) + UDP-alpha-D-glucose = [(1-&gt;3)-beta-D-glucosyl](n+1) + UDP + H(+). Its function is as follows. Alternate catalytic subunit of the 1,3-beta-glucan synthase (GS) complex. Synthesizes 1,3-beta-glucan, a major structural component of the yeast cell wall. Involved in cell wall synthesis, maintenance and remodeling. This is 1,3-beta-glucan synthase component FKS1 (FKS1) from Saccharomyces cerevisiae (strain ATCC 204508 / S288c) (Baker's yeast).